The primary structure comprises 708 residues: Ion-translocating oxidoreductase complex subunit C (708 aa).

2 4Fe-4S ferredoxin-type domains span residues 369-397 (GEPQ…QQLY) and 407-436 (KATT…VQYF). Cysteine 377, cysteine 380, cysteine 383, cysteine 387, cysteine 416, cysteine 419, cysteine 422, and cysteine 426 together coordinate [4Fe-4S] cluster. The tract at residues 599-686 (KARKLEQQQS…EEQVDPRKAA (88 aa)) is disordered.

Belongs to the 4Fe4S bacterial-type ferredoxin family. RnfC subfamily. The complex is composed of six subunits: RsxA, RsxB, RsxC, RsxD, RsxE and RsxG. Requires [4Fe-4S] cluster as cofactor.

Its subcellular location is the cell inner membrane. Functionally, part of a membrane-bound complex that couples electron transfer with translocation of ions across the membrane. Required to maintain the reduced state of SoxR. In Escherichia coli (strain 55989 / EAEC), this protein is Ion-translocating oxidoreductase complex subunit C.